Reading from the N-terminus, the 734-residue chain is DNA replication licensing factor MCM5 (734 aa).

At Ser2 the chain carries N-acetylserine. Residue Ser315 is modified to Phosphoserine. In terms of domain architecture, MCM spans 331-537 (VYEVISKSIA…RDVMLAKHVI (207 aa)). Arg371 is a binding site for ADP. Lys392 and Lys396 each carry N6-acetyllysine. The residue at position 605 (Ser605) is a Phosphoserine. Position 696 is an N6-acetyllysine (Lys696).

This sequence belongs to the MCM family. In terms of assembly, component of the MCM2-7 complex. The complex forms a toroidal hexameric ring with the proposed subunit order MCM2-MCM6-MCM4-MCM7-MCM3-MCM5. Component of the CMG helicase complex, a hexameric ring of related MCM2-7 subunits stabilized by CDC45 and the tetrameric GINS complex. Interacts with ANKRD17. Interacts with MCMBP. Interacts with TONSL; the interaction is direct.

Its subcellular location is the nucleus. It is found in the chromosome. The enzyme catalyses ATP + H2O = ADP + phosphate + H(+). Its function is as follows. Acts as a component of the MCM2-7 complex (MCM complex) which is the replicative helicase essential for 'once per cell cycle' DNA replication initiation and elongation in eukaryotic cells. Core component of CDC45-MCM-GINS (CMG) helicase, the molecular machine that unwinds template DNA during replication, and around which the replisome is built. The active ATPase sites in the MCM2-7 ring are formed through the interaction surfaces of two neighboring subunits such that a critical structure of a conserved arginine finger motif is provided in trans relative to the ATP-binding site of the Walker A box of the adjacent subunit. The six ATPase active sites, however, are likely to contribute differentially to the complex helicase activity. This chain is DNA replication licensing factor MCM5 (MCM5), found in Homo sapiens (Human).